The chain runs to 113 residues: Beta-defensin 112 (113 aa).

3 cysteine pairs are disulfide-bonded: cysteine 54/cysteine 82, cysteine 61/cysteine 75, and cysteine 65/cysteine 83.

The protein belongs to the beta-defensin family.

The protein localises to the secreted. Has antibacterial activity. In Pan troglodytes (Chimpanzee), this protein is Beta-defensin 112 (DEFB112).